The following is a 435-amino-acid chain: Xylose isomerase (435 aa).

Residues His100 and Asp103 contribute to the active site. Positions 231, 267, 270, 295, 306, 308, and 338 each coordinate Mg(2+).

This sequence belongs to the xylose isomerase family. Homotetramer. It depends on Mg(2+) as a cofactor.

It localises to the cytoplasm. The catalysed reaction is alpha-D-xylose = alpha-D-xylulofuranose. In Brucella ovis (strain ATCC 25840 / 63/290 / NCTC 10512), this protein is Xylose isomerase.